The sequence spans 358 residues: L-tryptophan methyltransferase trpM (358 aa).

Belongs to the methyltransferase superfamily.

It catalyses the reaction L-tryptophan + S-adenosyl-L-methionine = N(alpha)-methyl-L-tryptophan + S-adenosyl-L-homocysteine + H(+). The catalysed reaction is N(alpha)-methyl-L-tryptophan + S-adenosyl-L-methionine = N(alpha),N(alpha)-dimethyl-L-tryptophan + S-adenosyl-L-homocysteine + H(+). The enzyme catalyses N(alpha),N(alpha)-dimethyl-L-tryptophan + S-adenosyl-L-methionine = N(alpha),N(alpha),N(alpha)-trimethyl-L-tryptophan + S-adenosyl-L-homocysteine + H(+). Methyltransferase that catalyzes iterative L-tryptophan N-methylations to produce L-abrine (N-alpha-methyl-L-tryptophan) and N,N-alpha-dimethyl-L-tryptophan. Also catalyzes a third methylation to yield L-hypaphorine (N,N,N-alpha-trimethyl-L-tryptopan), an agonist of the phytohormone indole-3-acetic acid. Can also N-methylate the non-native amino acid substrate 4-hydroxytryptophan, but the ability to incorporate trpM into a functional psilocybin biosynthesis pathway is indeed thwarted by the inability of the L-tryptophan decarboxylase psiD to use N,N-dimethyl-4-hydroxytryptophan as substrate. The polypeptide is L-tryptophan methyltransferase trpM (Psilocybe serbica).